A 628-amino-acid chain; its full sequence is Chaperone protein HtpG (628 aa).

The a; substrate-binding stretch occupies residues 1–340 (MKGQETRGFQ…SNDLPLNVSR (340 aa)). Residues 341-556 (EILQDSRVTQ…ADDMTTQMAK (216 aa)) form a b region. The c stretch occupies residues 557-628 (LFAAAGQAAP…IRRMNQLLNA (72 aa)).

Belongs to the heat shock protein 90 family. In terms of assembly, homodimer.

The protein localises to the cytoplasm. Functionally, molecular chaperone. Has ATPase activity. In Sodalis glossinidius (strain morsitans), this protein is Chaperone protein HtpG.